The following is a 313-amino-acid chain: Ribosomal RNA small subunit methyltransferase H (313 aa).

Residues 35-37 (GGH), aspartate 55, phenylalanine 80, aspartate 102, and glutamine 109 contribute to the S-adenosyl-L-methionine site.

Belongs to the methyltransferase superfamily. RsmH family.

It is found in the cytoplasm. It carries out the reaction cytidine(1402) in 16S rRNA + S-adenosyl-L-methionine = N(4)-methylcytidine(1402) in 16S rRNA + S-adenosyl-L-homocysteine + H(+). Specifically methylates the N4 position of cytidine in position 1402 (C1402) of 16S rRNA. The sequence is that of Ribosomal RNA small subunit methyltransferase H from Shewanella violacea (strain JCM 10179 / CIP 106290 / LMG 19151 / DSS12).